A 53-amino-acid polypeptide reads, in one-letter code: Large ribosomal subunit protein bL32c (53 aa).

The protein belongs to the bacterial ribosomal protein bL32 family.

It localises to the plastid. The protein resides in the chloroplast. The polypeptide is Large ribosomal subunit protein bL32c (Phaseolus vulgaris (Kidney bean)).